The following is a 305-amino-acid chain: Mas-related G-protein coupled receptor member A8 (305 aa).

The Extracellular segment spans residues M1–H17. The chain crosses the membrane as a helical span at residues L18 to L38. Topologically, residues G39–A46 are cytoplasmic. A helical membrane pass occupies residues F47–I67. Residues N68–H85 are Extracellular-facing. The helical transmembrane segment at C86–S106 threads the bilayer. Topologically, residues T107 to T129 are cytoplasmic. The chain crosses the membrane as a helical span at residues A130–C150. N151 and N159 each carry an N-linked (GlcNAc...) asparagine glycan. The Extracellular segment spans residues N151 to T172. A helical transmembrane segment spans residues Y173–F193. The Cytoplasmic portion of the chain corresponds to S194–T207. The helical transmembrane segment at I208 to L228 threads the bilayer. Over S229 to L243 the chain is Extracellular. Residues F244 to F264 form a helical membrane-spanning segment. Residues V265–P305 are Cytoplasmic-facing.

The protein belongs to the G-protein coupled receptor 1 family. Mas subfamily. In terms of tissue distribution, expressed in a subset of sensory neurons that includes nociceptors. Expressed in the subclass of non-peptidergic sensory neurons that are IB4(+) and VR1(-).

The protein resides in the cell membrane. Functionally, orphan receptor. May be a receptor for RFamide-family neuropeptides such as NPFF and NPAF, which are analgesic in vivo. May regulate nociceptor function and/or development, including the sensation or modulation of pain. This chain is Mas-related G-protein coupled receptor member A8 (Mrgpra8), found in Mus musculus (Mouse).